Consider the following 98-residue polypeptide: Tan_12Cys (98 aa).

The first 21 residues, 1-21 (MNLKVLFLLAMVLVTLCLGED), serve as a signal peptide directing secretion. Residues 22–28 (RVTDRRK) constitute a propeptide that is removed on maturation.

Belongs to the teretoxin C (TC) superfamily. Post-translationally, contains 6 disulfide bonds. As to expression, expressed by the venom duct.

The protein resides in the secreted. The polypeptide is Tan_12Cys (Terebra anilis (Auger snail)).